The sequence spans 590 residues: 4-oxocyclohex-2-ene-1-carboxylate 5-dehydrogenase (590 aa).

Belongs to the FAD-dependent oxidoreductase 2 family. Forms multimers. The cofactor is FAD.

It carries out the reaction 4-oxocyclohex-2-ene-1-carboxylate + NAD(+) = 4-oxocyclohexa-2,5-diene-1-carboxylate + NADH + H(+). Its function is as follows. Desaturase involved in a cyclohexanecarboxylate (CHCA) degradation pathway. Probably catalyzes the conversion of 4-oxocyclohexenecarboxylate to 4-oxocyclohex-2,5-dienecarboxylate, which is spontaneously isomerized to 4-hydroxybenzoate (4-HBA). In Sinomonas cyclohexanicum (Corynebacterium cyclohexanicum), this protein is 4-oxocyclohex-2-ene-1-carboxylate 5-dehydrogenase.